We begin with the raw amino-acid sequence, 330 residues long: Polygalacturonase inhibitor (330 aa).

The N-terminal stretch at 1-24 (MELKFSTFLSLTLLFSSVLNPALS) is a signal peptide. Disulfide bonds link Cys-27–Cys-57 and Cys-58–Cys-65. LRR repeat units lie at residues 69–92 (TNRINSLTIFAGQVSGQIPALVGD), 93–118 (LPYLETLEFHKQPNLTGPIQPAIAKL), 119–141 (KGLKSLRLSWTNLSGSVPDFLSQ), 142–166 (LKNLTFLDLSFNNLTGAIPSSLSEL), 167–192 (PNLGALRLDRNKLTGHIPISFGQFIG), 194–215 (VPDLYLSHNQLSGNIPTSFAQM), and 217–237 (FTSIDLSRNKLEGDASVIFGL). N-linked (GlcNAc...) asparagine glycosylation is found at Asn-106, Asn-130, Asn-144, and Asn-154. N-linked (GlcNAc...) asparagine glycans are attached at residues Asn-238 and Asn-254. LRR repeat units follow at residues 239–261 (KTTQIVDLSRNLLEFNLSKVEFP), 262–285 (TSLTSLDINHNKIYGSIPVEFTQL), and 287–309 (FQFLNVSYNRLCGQIPVGGKLQS). Residue Asn-291 is glycosylated (N-linked (GlcNAc...) asparagine). 2 cysteine pairs are disulfide-bonded: Cys-298-Cys-320 and Cys-322-Cys-329.

Belongs to the polygalacturonase-inhibiting protein family. In terms of assembly, homodimer. N-linked glycosylated. As to expression, mostly expressed in fruits, and, to a lower extent, in flowers and leaves.

It localises to the secreted. It is found in the extracellular space. The protein resides in the apoplast. The protein localises to the cell wall. In terms of biological role, inhibitor of fungal polygalacturonase. It is an important factor for plant resistance to phytopathogenic fungi. In Pyrus communis (Pear), this protein is Polygalacturonase inhibitor (PGIP).